Consider the following 343-residue polypeptide: Malate dehydrogenase, peroxisomal (343 aa).

NAD(+) is bound by residues 8–14 (GASGGVG) and aspartate 34. Substrate contacts are provided by arginine 80 and arginine 86. NAD(+) contacts are provided by residues asparagine 93 and 116–118 (ISN). The substrate site is built by asparagine 118 and arginine 152. The active-site Proton acceptor is histidine 187. Methionine 237 serves as a coordination point for NAD(+).

This sequence belongs to the LDH/MDH superfamily. MDH type 1 family. Homodimer.

It localises to the peroxisome. The enzyme catalyses (S)-malate + NAD(+) = oxaloacetate + NADH + H(+). The polypeptide is Malate dehydrogenase, peroxisomal (MDH3) (Saccharomyces cerevisiae (strain ATCC 204508 / S288c) (Baker's yeast)).